The chain runs to 409 residues: Astacin-like metalloendopeptidase (409 aa).

An N-terminal signal peptide occupies residues 1–19 (MDLKMLLIFTAFLLPAVLG). Residues 20-86 (FPIQDNYENS…EGDIVPRRSR (67 aa)) constitute a propeptide that is removed on maturation. Residues 30–42 (TATSESTQVTTEE) show a composition bias toward low complexity. The interval 30–55 (TATSESTQVTTEESIYDSPSPTETDS) is disordered. Residues 87-285 (SAFNCRNCYW…AKINKLYNCS (199 aa)) form the Peptidase M12A domain. 5 cysteine pairs are disulfide-bonded: cysteine 91–cysteine 94, cysteine 134–cysteine 284, cysteine 155–cysteine 175, cysteine 287–cysteine 313, and cysteine 339–cysteine 362. Histidine 183 contributes to the Zn(2+) binding site. Glutamate 184 is a catalytic residue. Zn(2+)-binding residues include histidine 187 and histidine 193. The CUB domain occupies 287–399 (CSTIIDAAFG…SGFQATFTSA (113 aa)).

The cofactor is Zn(2+).

The protein resides in the cytoplasm. It localises to the cell membrane. The protein localises to the cytoplasmic vesicle. Its subcellular location is the secretory vesicle. It is found in the cortical granule. In terms of biological role, probable oocyte-specific oolemmal receptor involved in sperm and egg adhesion and fertilization. Protease which may play a role in the breaking down of the vitelline membrane (days 0-5) and possibly, in the digestion of the egg white (days 9-12). In Coturnix japonica (Japanese quail), this protein is Astacin-like metalloendopeptidase.